The primary structure comprises 192 residues: HTH-type transcriptional regulator Hpr (192 aa).

One can recognise an HTH marR-type domain in the interval 12 to 156; the sequence is SIIFSHKFAQ…LLSIVRHVYG (145 aa). A DNA-binding region (H-T-H motif) is located at residues 62 to 85; that stretch reads ISDIAKFGVMHVSTAFNFSKKLEE.

Homodimer.

Functionally, negative regulator of protease production and sporulation. This Halalkalibacterium halodurans (strain ATCC BAA-125 / DSM 18197 / FERM 7344 / JCM 9153 / C-125) (Bacillus halodurans) protein is HTH-type transcriptional regulator Hpr.